Consider the following 151-residue polypeptide: Probable cGMP 3',5'-cyclic phosphodiesterase subunit delta (151 aa).

Belongs to the PDE6D/unc-119 family. As to quaternary structure, interacts with Pde6.

It is found in the nucleus. The protein resides in the cytoplasm. The sequence is that of Probable cGMP 3',5'-cyclic phosphodiesterase subunit delta from Aedes aegypti (Yellowfever mosquito).